The chain runs to 875 residues: Probable inorganic carbon transporter subunit DabA (875 aa).

Residues Cys-399, Asp-401, His-581, and Cys-596 each coordinate Zn(2+).

It belongs to the inorganic carbon transporter (TC 9.A.2) DabA family. Forms a complex with DabB. Zn(2+) is required as a cofactor.

The protein localises to the cell membrane. Functionally, part of an energy-coupled inorganic carbon pump. In Bacillus thuringiensis (strain Al Hakam), this protein is Probable inorganic carbon transporter subunit DabA.